A 657-amino-acid polypeptide reads, in one-letter code: Glycogen debranching enzyme (657 aa).

Asp336 acts as the Nucleophile in catalysis. The active-site Proton donor is the Glu371. The disordered stretch occupies residues 460–479; that stretch reads ANGEENRDGTNNNYSNNHGK.

It belongs to the glycosyl hydrolase 13 family.

It carries out the reaction Hydrolysis of (1-&gt;6)-alpha-D-glucosidic linkages to branches with degrees of polymerization of three or four glucose residues in limit dextrin.. Its pathway is glycan degradation; glycogen degradation. Its function is as follows. Removes maltotriose and maltotetraose chains that are attached by 1,6-alpha-linkage to the limit dextrin main chain, generating a debranched limit dextrin. The protein is Glycogen debranching enzyme of Escherichia coli O6:K15:H31 (strain 536 / UPEC).